Consider the following 363-residue polypeptide: Mitogen-activated protein kinase 13 (363 aa).

In terms of domain architecture, Protein kinase spans 33-319; the sequence is IPPIEPIGRG…VDEALKQPYL (287 aa). ATP is bound by residues 39 to 47 and Lys-62; that span reads IGRGAYGIV. The active-site Proton acceptor is the Asp-159. Phosphothreonine is present on Thr-191. Positions 191-193 match the TXY motif; that stretch reads TEY. Residue Tyr-193 is modified to Phosphotyrosine. Position 196 is a phosphothreonine (Thr-196).

It belongs to the protein kinase superfamily. CMGC Ser/Thr protein kinase family. MAP kinase subfamily. In terms of assembly, interacts with MKK6. Dually phosphorylated on Thr-191 and Tyr-193, which activates the enzyme. In terms of tissue distribution, expressed in roots, stems and flower buds.

The enzyme catalyses L-seryl-[protein] + ATP = O-phospho-L-seryl-[protein] + ADP + H(+). It catalyses the reaction L-threonyl-[protein] + ATP = O-phospho-L-threonyl-[protein] + ADP + H(+). Activated by threonine and tyrosine phosphorylation. Activated by the MAP kinase kinase MKK6 in vitro. MKK6-MPK13 module positively regulates lateral root formation. This Arabidopsis thaliana (Mouse-ear cress) protein is Mitogen-activated protein kinase 13 (MPK13).